The following is a 473-amino-acid chain: O-methyltransferase aclU (473 aa).

S-adenosyl-L-methionine contacts are provided by residues aspartate 320 and 354–356 (GDF). The Proton acceptor role is filled by histidine 373.

It belongs to the class I-like SAM-binding methyltransferase superfamily. Cation-independent O-methyltransferase family. COMT subfamily.

Its pathway is mycotoxin biosynthesis. O-methyltransferase; part of the gene cluster that mediates the biosynthesis of aspirochlorine (or antibiotic A30641), an unusual halogenated spiro compound with distinctive antifungal properties due to selective inhibition of protein biosynthesis, and which is also active against bacteria, viruses, and murine tumor cells. The non-ribosomal peptide synthetase (NRPS) aclP is responsible the formation of the diketopiperazine (DKP) core from the condensation of 2 phenylalanine residues. One Phe residue is tailored into chlorotyrosine by hydroxylation and chlorination, whereas the second Phe undergoes an unprecedented C-C bond cleavage to be converted into glycine. After formation of the DKP, sulfur is incorporated into the DKP by conjugation with glutathione by aclG, followed by its stepwise degradation to the thiol by aclI, aclJ and aclK, and the dithiol oxidation by aclT. In addition, oxygenases (aclB, aclC, aclL and aclO) and O-methyltransferases (aclM and aclU) act as tailoring enzymes to produce the intermediate dechloroaspirochlorine. Ultimately, chlorination of dechloroaspirochlorine by the halogenase aclH is the last step in the aspirochlorine pathway. This chain is O-methyltransferase aclU, found in Aspergillus oryzae (strain ATCC 42149 / RIB 40) (Yellow koji mold).